Reading from the N-terminus, the 102-residue chain is Protein iss (102 aa).

Increases serum survival and confers group II surface exclusion. This Escherichia coli protein is Protein iss (iss).